Here is a 90-residue protein sequence, read N- to C-terminus: Small ribosomal subunit protein bS18 (90 aa).

Belongs to the bacterial ribosomal protein bS18 family. In terms of assembly, part of the 30S ribosomal subunit. Forms a tight heterodimer with protein bS6.

Functionally, binds as a heterodimer with protein bS6 to the central domain of the 16S rRNA, where it helps stabilize the platform of the 30S subunit. The sequence is that of Small ribosomal subunit protein bS18 from Bordetella avium (strain 197N).